The primary structure comprises 891 residues: Alanine--tRNA ligase (891 aa).

Residues His564, His568, Cys677, and His681 each coordinate Zn(2+).

It belongs to the class-II aminoacyl-tRNA synthetase family. Requires Zn(2+) as cofactor.

The protein resides in the cytoplasm. The catalysed reaction is tRNA(Ala) + L-alanine + ATP = L-alanyl-tRNA(Ala) + AMP + diphosphate. Functionally, catalyzes the attachment of alanine to tRNA(Ala) in a two-step reaction: alanine is first activated by ATP to form Ala-AMP and then transferred to the acceptor end of tRNA(Ala). Also edits incorrectly charged Ser-tRNA(Ala) and Gly-tRNA(Ala) via its editing domain. The polypeptide is Alanine--tRNA ligase (Rhodopseudomonas palustris (strain BisA53)).